The chain runs to 49 residues: Defensin Tk-AMP-D2 (49 aa).

4 disulfide bridges follow: C3–C49, C14–C34, C20–C43, and C24–C45.

Plant defense peptide. The polypeptide is Defensin Tk-AMP-D2 (Triticum kiharae (Wheat)).